Here is an 886-residue protein sequence, read N- to C-terminus: DNA mismatch repair protein MutS (886 aa).

627 to 634 (GPNMGGKS) contacts ATP. Residues 834-857 (VECADAPAPSDATHPALDRLRDID) form a disordered region.

This sequence belongs to the DNA mismatch repair MutS family.

Functionally, this protein is involved in the repair of mismatches in DNA. It is possible that it carries out the mismatch recognition step. This protein has a weak ATPase activity. This Burkholderia vietnamiensis (strain G4 / LMG 22486) (Burkholderia cepacia (strain R1808)) protein is DNA mismatch repair protein MutS.